Here is a 380-residue protein sequence, read N- to C-terminus: MCAQVWLLTDRLIREDYPQVQILRALRQRCSEQDVGFRAVFLDQIAVTVVGGHLGLQLSQKPLTTFPDVVVVRVSTPSVQSDSEITILRHLEKLGCRLVNRPQSILNCINKFWTFQELAGHGVPMPDTFSYGGHEDFSKMIDEAEPLGYPVVVKSTRGHRGKAVFLARDKHHLSDICHLVRHDVPYLFQKYVKESHGKDIRVVVVGGQVIGSMLRCSTDGRMQSNCFLGGVGVKCPLTEQGKQLAIQVSNILGMDFCGIDLLIMDDGSFTVCEANANVGFLAFDQACNLDVGAIIADYAMSLLPNRQTGKMAILPGLASPREKNEPNGCVSAQGVAESVYAITNGSTSSESEPELGEARDSSVKTMGAPPAHVAQAWLQH.

In terms of domain architecture, ATP-grasp spans 115 to 300; sequence FQELAGHGVP…VGAIIADYAM (186 aa). ATP-binding positions include lysine 154, 189–199, and arginine 215; that span reads QKYVKESHGKD. 3 residues coordinate Mg(2+): aspartate 260, glutamate 273, and asparagine 275. Mn(2+) is bound by residues aspartate 260, glutamate 273, and asparagine 275. The residue at position 319 (serine 319) is a Phosphoserine. Positions 345 to 370 are disordered; it reads GSTSSESEPELGEARDSSVKTMGAPP.

It belongs to the RimK family. It depends on Mg(2+) as a cofactor. Mn(2+) serves as cofactor. In terms of tissue distribution, highly expressed in spinal cord and brain.

It is found in the cytoplasm. It catalyses the reaction N-acetyl-L-aspartate + L-glutamate + ATP = N-acetyl-L-aspartyl-L-glutamate + ADP + phosphate + H(+). It carries out the reaction N-acetyl-L-aspartate + 2 L-glutamate + 2 ATP = N-acetyl-L-aspartyl-L-glutamyl-L-glutamate + 2 ADP + 2 phosphate + 2 H(+). Its function is as follows. Catalyzes the synthesis of N-acetyl-L-aspartyl-L-glutamate (NAAG) and N-acetyl-L-aspartyl-L-glutamyl-L-glutamate. The polypeptide is N-acetylaspartylglutamate synthase A (Rimkla) (Mus musculus (Mouse)).